Consider the following 173-residue polypeptide: Adenine phosphoribosyltransferase (173 aa).

The protein belongs to the purine/pyrimidine phosphoribosyltransferase family. As to quaternary structure, homodimer.

It localises to the cytoplasm. It catalyses the reaction AMP + diphosphate = 5-phospho-alpha-D-ribose 1-diphosphate + adenine. It participates in purine metabolism; AMP biosynthesis via salvage pathway; AMP from adenine: step 1/1. Catalyzes a salvage reaction resulting in the formation of AMP, that is energically less costly than de novo synthesis. The chain is Adenine phosphoribosyltransferase from Desulfitobacterium hafniense (strain Y51).